The chain runs to 506 residues: MDPFLEFRVGNISLNEFYRRTIQSEFERILEDPLSNMKNYRFSKQSNYSTKEKTPLSIGVNCLDIDDTGQVLLGGGDDGSLSIWGLDESLHRNDEGEQELINKRLNYIKRQPHQSDDEPAQIMGYKNKRTRINDNNTMRLVHSFQTQRNKYRMYRQSSAAVPVQRSHISNKTDSPIGFSETLSETDSEASISHHKYGITTLKWYKADNGMFFTGSNDKTVKIWDTNRFEAVQDINLGYKINQIDNNVVDDSSLLVVASEDYYPRLIDLRTMNSGVTALGMGNQTRMQSEILCCKFNPVREQIIACGDMEGGVKLWDLRMRNRLYSELKRNKNRFKTINNDDNDDQSDVYFSSNQSKAHLRCCSDIVWNSEGSELCSVGMDGKLNVWRPFTEILQPEGLASYSQLGTQDLSRIKYKKRVSRRLLWFDKFLLCITDNGEVEIYNTEEKKLWNKLEYPMVNQVKKNQASHCQFSSMIVQTNIMNSVGLKLFFGTNNNTVSDGGSIFECS.

5 WD repeats span residues 55–94 (PLSI…HRND), 193–233 (HHKY…AVQD), 285–325 (RMQS…RLYS), 357–396 (AHLR…LQPE), and 404–451 (LGTQ…LWNK).

It localises to the nucleus. Functionally, involved in transcription-coupled repair nucleotide excision repair (NER) of UV-induced DNA lesions. The protein is Radiation-sensitive protein 28 (RAD28) of Saccharomyces cerevisiae (strain ATCC 204508 / S288c) (Baker's yeast).